We begin with the raw amino-acid sequence, 267 residues long: Putative carbamate hydrolase RutD (267 aa).

The AB hydrolase-1 domain occupies 14–115 (PVMVMISGLG…SALVIINGWL (102 aa)).

It belongs to the AB hydrolase superfamily. Hydrolase RutD family.

It carries out the reaction carbamate + 2 H(+) = NH4(+) + CO2. Its function is as follows. Involved in pyrimidine catabolism. May facilitate the hydrolysis of carbamate, a reaction that can also occur spontaneously. This Cronobacter turicensis (strain DSM 18703 / CCUG 55852 / LMG 23827 / z3032) protein is Putative carbamate hydrolase RutD.